Reading from the N-terminus, the 298-residue chain is ATP phosphoribosyltransferase (298 aa).

The protein belongs to the ATP phosphoribosyltransferase family. Long subfamily. It depends on Mg(2+) as a cofactor.

The protein localises to the cytoplasm. The catalysed reaction is 1-(5-phospho-beta-D-ribosyl)-ATP + diphosphate = 5-phospho-alpha-D-ribose 1-diphosphate + ATP. Its pathway is amino-acid biosynthesis; L-histidine biosynthesis; L-histidine from 5-phospho-alpha-D-ribose 1-diphosphate: step 1/9. With respect to regulation, feedback inhibited by histidine. Functionally, catalyzes the condensation of ATP and 5-phosphoribose 1-diphosphate to form N'-(5'-phosphoribosyl)-ATP (PR-ATP). Has a crucial role in the pathway because the rate of histidine biosynthesis seems to be controlled primarily by regulation of HisG enzymatic activity. The protein is ATP phosphoribosyltransferase of Vibrio parahaemolyticus serotype O3:K6 (strain RIMD 2210633).